Here is a 105-residue protein sequence, read N- to C-terminus: N(4)-acetylcytidine amidohydrolase (105 aa).

An ASCH domain is found at Thr7–Glu93. Lys21 serves as the catalytic Proton acceptor. The active-site Nucleophile is Thr24. Glu74 serves as the catalytic Proton donor.

It belongs to the N(4)-acetylcytidine amidohydrolase family.

The enzyme catalyses N(4)-acetylcytidine + H2O = cytidine + acetate + H(+). The catalysed reaction is N(4)-acetyl-2'-deoxycytidine + H2O = 2'-deoxycytidine + acetate + H(+). It catalyses the reaction N(4)-acetylcytosine + H2O = cytosine + acetate + H(+). Catalyzes the hydrolysis of N(4)-acetylcytidine (ac4C). The protein is N(4)-acetylcytidine amidohydrolase of Shewanella baltica (strain OS155 / ATCC BAA-1091).